We begin with the raw amino-acid sequence, 388 residues long: L-arabinitol 4-dehydrogenase (388 aa).

The Zn(2+) site is built by C55, H80, E81, C110, C113, C116, C124, and E165. NAD(+) contacts are provided by residues 192–193 (PI), D213, R218, I293, and 317–319 (QYR).

Belongs to the zinc-containing alcohol dehydrogenase family. Homotetramer. Requires Zn(2+) as cofactor.

It carries out the reaction L-arabinitol + NAD(+) = L-xylulose + NADH + H(+). It participates in carbohydrate degradation; L-arabinose degradation via L-arabinitol; D-xylulose 5-phosphate from L-arabinose (fungal route): step 2/5. In terms of biological role, catalyzes the NAD-dependent oxidation of L-arabinitol to L-xylulose in the fungal L-arabinose catabolic pathway. L-arabinose catabolism is important for using plant material as a carbon source. NADP cannot act as a cosubstrate. This is L-arabinitol 4-dehydrogenase (lad) from Talaromyces emersonii (Thermophilic fungus).